The following is a 303-amino-acid chain: Probable cell division protein WhiA (303 aa).

Positions 272 to 303 (SIQQIADSLAVPLTKSGVNHRLRKINKIAEDL) form a DNA-binding region, H-T-H motif.

The protein belongs to the WhiA family.

In terms of biological role, involved in cell division and chromosome segregation. The chain is Probable cell division protein WhiA from Streptococcus mutans serotype c (strain ATCC 700610 / UA159).